A 176-amino-acid polypeptide reads, in one-letter code: NAD(P)H-quinone oxidoreductase subunit 6, chloroplastic (176 aa).

A run of 5 helical transmembrane segments spans residues 10–30 (FLLVFLGLGLILGGLGVVLLT), 32–52 (PIFSAFSLGLVLVCISLFYIL), 61–81 (AQLLIYVGAINVLILFAVMFM), 95–115 (VGNGLTSLICTSLFVLLITII), and 152–172 (FFLPFEFISIILLVALIGAIA).

Belongs to the complex I subunit 6 family. As to quaternary structure, NDH is composed of at least 16 different subunits, 5 of which are encoded in the nucleus.

The protein resides in the plastid. It localises to the chloroplast thylakoid membrane. The catalysed reaction is a plastoquinone + NADH + (n+1) H(+)(in) = a plastoquinol + NAD(+) + n H(+)(out). It carries out the reaction a plastoquinone + NADPH + (n+1) H(+)(in) = a plastoquinol + NADP(+) + n H(+)(out). NDH shuttles electrons from NAD(P)H:plastoquinone, via FMN and iron-sulfur (Fe-S) centers, to quinones in the photosynthetic chain and possibly in a chloroplast respiratory chain. The immediate electron acceptor for the enzyme in this species is believed to be plastoquinone. Couples the redox reaction to proton translocation, and thus conserves the redox energy in a proton gradient. This is NAD(P)H-quinone oxidoreductase subunit 6, chloroplastic (ndhG) from Populus alba (White poplar).